We begin with the raw amino-acid sequence, 211 residues long: Large ribosomal subunit protein uL3 (211 aa).

Belongs to the universal ribosomal protein uL3 family. In terms of assembly, part of the 50S ribosomal subunit. Forms a cluster with proteins L14 and L19.

Functionally, one of the primary rRNA binding proteins, it binds directly near the 3'-end of the 23S rRNA, where it nucleates assembly of the 50S subunit. The protein is Large ribosomal subunit protein uL3 of Geotalea daltonii (strain DSM 22248 / JCM 15807 / FRC-32) (Geobacter daltonii).